A 506-amino-acid polypeptide reads, in one-letter code: NAD(P)H-quinone oxidoreductase subunit 2 (506 aa).

14 consecutive transmembrane segments (helical) span residues 14 to 34 (AIIPEAFILLGIVGTLLVDLA), 42 to 62 (WAPVICYISLGSSLISLALQW), 79 to 99 (LAIAFRSIIALSTLISLLISW), 108 to 128 (PIGEFAAIVLSATLGAMLLCG), 132 to 152 (LVSVFISLETLSVASYCLSGY), 167 to 187 (LLVGSAAAAVYLYGSSFLYGL), 206 to 226 (FITSLSLVFVLSTVAFKIAAV), 240 to 260 (PTPVVAFLSVGSKTAGFAFAI), 276 to 296 (LLFTILAILSMALGNIVALAQ), 302 to 322 (MLAYSSIGQAGFVMIGIVSGT), 330 to 350 (VLYLAAYLFMNLGAFSCVILF), 374 to 394 (LGLSLCLLSLGGLPPMLGFFG), 409 to 429 (LLVVVGLITSVISIYYYISVI), and 462 to 482 (IALYTCIAVTALGGILSNPLF).

This sequence belongs to the complex I subunit 2 family. As to quaternary structure, NDH-1 can be composed of about 15 different subunits; different subcomplexes with different compositions have been identified which probably have different functions.

The protein localises to the cellular thylakoid membrane. It catalyses the reaction a plastoquinone + NADH + (n+1) H(+)(in) = a plastoquinol + NAD(+) + n H(+)(out). The enzyme catalyses a plastoquinone + NADPH + (n+1) H(+)(in) = a plastoquinol + NADP(+) + n H(+)(out). Functionally, NDH-1 shuttles electrons from an unknown electron donor, via FMN and iron-sulfur (Fe-S) centers, to quinones in the respiratory and/or the photosynthetic chain. The immediate electron acceptor for the enzyme in this species is believed to be plastoquinone. Couples the redox reaction to proton translocation, and thus conserves the redox energy in a proton gradient. Cyanobacterial NDH-1 also plays a role in inorganic carbon-concentration. This is NAD(P)H-quinone oxidoreductase subunit 2 from Prochlorococcus marinus subsp. pastoris (strain CCMP1986 / NIES-2087 / MED4).